Reading from the N-terminus, the 275-residue chain is Large ribosomal subunit protein uL2 (275 aa).

The disordered stretch occupies residues Val-220–Arg-275. A compositionally biased stretch (basic and acidic residues) spans Pro-227–Ala-239. The span at Lys-249–Asn-262 shows a compositional bias: basic residues.

The protein belongs to the universal ribosomal protein uL2 family. As to quaternary structure, part of the 50S ribosomal subunit. Forms a bridge to the 30S subunit in the 70S ribosome.

One of the primary rRNA binding proteins. Required for association of the 30S and 50S subunits to form the 70S ribosome, for tRNA binding and peptide bond formation. It has been suggested to have peptidyltransferase activity; this is somewhat controversial. Makes several contacts with the 16S rRNA in the 70S ribosome. This Roseiflexus sp. (strain RS-1) protein is Large ribosomal subunit protein uL2.